Here is a 37-residue protein sequence, read N- to C-terminus: Gene 40 protein (37 aa).

The chain is Gene 40 protein (40) from Mycobacterium phage L5 (Mycobacteriophage L5).